Reading from the N-terminus, the 212-residue chain is uncharacterized protein (212 aa).

This is an uncharacterized protein from Archaeoglobus fulgidus (strain ATCC 49558 / DSM 4304 / JCM 9628 / NBRC 100126 / VC-16).